Here is a 331-residue protein sequence, read N- to C-terminus: DNA-directed RNA polymerase subunit alpha (331 aa).

The segment at 1–246 (MMQTSRTLHN…GLFSPLQEVS (246 aa)) is alpha N-terminal domain (alpha-NTD). The tract at residues 256–331 (AEDNQKNQIP…LTLPRERSKT (76 aa)) is alpha C-terminal domain (alpha-CTD).

It belongs to the RNA polymerase alpha chain family. In terms of assembly, in cyanobacteria the RNAP catalytic core is composed of 2 alpha, 1 beta, 1 beta', 1 gamma and 1 omega subunit. When a sigma factor is associated with the core the holoenzyme is formed, which can initiate transcription.

The catalysed reaction is RNA(n) + a ribonucleoside 5'-triphosphate = RNA(n+1) + diphosphate. Functionally, DNA-dependent RNA polymerase catalyzes the transcription of DNA into RNA using the four ribonucleoside triphosphates as substrates. The protein is DNA-directed RNA polymerase subunit alpha of Synechococcus sp. (strain JA-3-3Ab) (Cyanobacteria bacterium Yellowstone A-Prime).